A 586-amino-acid chain; its full sequence is Scavenger receptor cysteine-rich domain-containing group B protein (586 aa).

Residues 1-33 (MGPSERPSIGWTPKEAEMQIGPQPDGWSRGWKP) form a disordered region. A signal peptide spans 1-58 (MGPSERPSIGWTPKEAEMQIGPQPDGWSRGWKPGDRGAVPLPLSPALSFLLLFPLASA). SRCR domains follow at residues 69–169 (LRLV…VLCD), 200–300 (VRLV…VLCA), 355–455 (LRLV…ALCA), and 484–584 (LRLA…VLCQ). 12 disulfide bridges follow: cysteine 94-cysteine 158, cysteine 107-cysteine 168, cysteine 138-cysteine 148, cysteine 225-cysteine 289, cysteine 238-cysteine 299, cysteine 269-cysteine 279, cysteine 380-cysteine 444, cysteine 393-cysteine 454, cysteine 424-cysteine 434, cysteine 509-cysteine 573, cysteine 522-cysteine 583, and cysteine 553-cysteine 563.

Its subcellular location is the secreted. The polypeptide is Scavenger receptor cysteine-rich domain-containing group B protein (Mus musculus (Mouse)).